The sequence spans 635 residues: 1-deoxy-D-xylulose-5-phosphate synthase (635 aa).

Residues histidine 72 and 113 to 115 (GHA) contribute to the thiamine diphosphate site. Aspartate 144 lines the Mg(2+) pocket. Residues 145 to 146 (GA), asparagine 174, tyrosine 286, and glutamate 369 contribute to the thiamine diphosphate site. Asparagine 174 is a binding site for Mg(2+).

It belongs to the transketolase family. DXPS subfamily. As to quaternary structure, homodimer. The cofactor is Mg(2+). Thiamine diphosphate serves as cofactor.

The enzyme catalyses D-glyceraldehyde 3-phosphate + pyruvate + H(+) = 1-deoxy-D-xylulose 5-phosphate + CO2. The protein operates within metabolic intermediate biosynthesis; 1-deoxy-D-xylulose 5-phosphate biosynthesis; 1-deoxy-D-xylulose 5-phosphate from D-glyceraldehyde 3-phosphate and pyruvate: step 1/1. Its function is as follows. Catalyzes the acyloin condensation reaction between C atoms 2 and 3 of pyruvate and glyceraldehyde 3-phosphate to yield 1-deoxy-D-xylulose-5-phosphate (DXP). The polypeptide is 1-deoxy-D-xylulose-5-phosphate synthase (Gloeothece citriformis (strain PCC 7424) (Cyanothece sp. (strain PCC 7424))).